The chain runs to 490 residues: Proline--tRNA ligase (490 aa).

Belongs to the class-II aminoacyl-tRNA synthetase family. ProS type 3 subfamily. As to quaternary structure, homodimer.

It is found in the cytoplasm. It catalyses the reaction tRNA(Pro) + L-proline + ATP = L-prolyl-tRNA(Pro) + AMP + diphosphate. Its function is as follows. Catalyzes the attachment of proline to tRNA(Pro) in a two-step reaction: proline is first activated by ATP to form Pro-AMP and then transferred to the acceptor end of tRNA(Pro). The sequence is that of Proline--tRNA ligase from Salinibacter ruber (strain DSM 13855 / M31).